The chain runs to 62 residues: SPbeta prophage-derived uncharacterized protein YonU (62 aa).

A coiled-coil region spans residues 1 to 32; that stretch reads MEKKFLDAIQQLTKELEMLKKDIDSIKEATVR.

This is SPbeta prophage-derived uncharacterized protein YonU (yonU) from Bacillus subtilis (strain 168).